Consider the following 192-residue polypeptide: Putative metal-sulfur cluster biosynthesis proteins YuaD (192 aa).

The MOSC domain maps to Ala-15–His-179.

This chain is Putative metal-sulfur cluster biosynthesis proteins YuaD (yuaD), found in Bacillus subtilis (strain 168).